A 257-amino-acid chain; its full sequence is UPF0246 protein Rpic_2164 (257 aa).

This sequence belongs to the UPF0246 family.

This Ralstonia pickettii (strain 12J) protein is UPF0246 protein Rpic_2164.